We begin with the raw amino-acid sequence, 151 residues long: Protein-export protein SecB (151 aa).

Belongs to the SecB family. As to quaternary structure, homotetramer, a dimer of dimers. One homotetramer interacts with 1 SecA dimer.

The protein localises to the cytoplasm. In terms of biological role, one of the proteins required for the normal export of preproteins out of the cell cytoplasm. It is a molecular chaperone that binds to a subset of precursor proteins, maintaining them in a translocation-competent state. It also specifically binds to its receptor SecA. This chain is Protein-export protein SecB, found in Acinetobacter baylyi (strain ATCC 33305 / BD413 / ADP1).